We begin with the raw amino-acid sequence, 284 residues long: GPN-loop GTPase 3 (284 aa).

G13–T18 provides a ligand contact to GTP. The Gly-Pro-Asn (GPN)-loop; involved in dimer interface motif lies at G72–N74. T174–D177 lines the GTP pocket. Residues K261–E284 form a disordered region.

The protein belongs to the GPN-loop GTPase family. Heterodimer with GPN1. Binds to RNA polymerase II (RNAPII). Interacts directly with subunits RPB4 and RPB7 and the CTD of RPB1.

Its function is as follows. Small GTPase required for proper localization of RNA polymerase II (RNAPII). May act at an RNAP assembly step prior to nuclear import. This Bos taurus (Bovine) protein is GPN-loop GTPase 3.